The following is a 500-amino-acid chain: Melanopsin (500 aa).

At M1 to Y65 the chain is on the extracellular side. N-linked (GlcNAc...) asparagine glycosylation is present at N18. The helical transmembrane segment at I66 to I86 threads the bilayer. Topologically, residues Y87–M101 are cytoplasmic. Residues F102–F122 form a helical membrane-spanning segment. The Extracellular portion of the chain corresponds to A123–E138. C137 and C215 are oxidised to a cystine. A helical transmembrane segment spans residues L139 to A159. Over A160–G182 the chain is Cytoplasmic. The helical transmembrane segment at A183 to W203 threads the bilayer. The Extracellular segment spans residues S204–L232. A helical transmembrane segment spans residues L233–F253. Over Q254–K286 the chain is Cytoplasmic. Residues I287–L307 traverse the membrane as a helical segment. Over T308–N322 the chain is Extracellular. The chain crosses the membrane as a helical span at residues S323 to T343. K330 is subject to N6-(retinylidene)lysine. Over H344–N500 the chain is Cytoplasmic. Disordered regions lie at residues G406–S428, V448–V470, and E481–N500. Composition is skewed to polar residues over residues S411–S428 and V448–Q462.

The protein belongs to the G-protein coupled receptor 1 family. Opsin subfamily. Expressed in a subset of retinal horizontal cells as well as in retinal ganglion cells.

It localises to the cell membrane. Its function is as follows. Photoreceptor implicated in non-image-forming responses to light. The polypeptide is Melanopsin (opn4) (Rutilus rutilus (Roach)).